The primary structure comprises 380 residues: tRNA-specific 2-thiouridylase MnmA (380 aa).

ATP-binding positions include 10–17 (AMSGGVDS) and L36. C106 (nucleophile) is an active-site residue. C106 and C202 are oxidised to a cystine. G130 contributes to the ATP binding site. An interaction with tRNA region spans residues 152-154 (KNQ). Residue C202 is the Cysteine persulfide intermediate of the active site. Residues 308 to 309 (RY) are interaction with tRNA.

The protein belongs to the MnmA/TRMU family.

The protein resides in the cytoplasm. The catalysed reaction is S-sulfanyl-L-cysteinyl-[protein] + uridine(34) in tRNA + AH2 + ATP = 2-thiouridine(34) in tRNA + L-cysteinyl-[protein] + A + AMP + diphosphate + H(+). Catalyzes the 2-thiolation of uridine at the wobble position (U34) of tRNA, leading to the formation of s(2)U34. This is tRNA-specific 2-thiouridylase MnmA from Leptospira biflexa serovar Patoc (strain Patoc 1 / Ames).